The primary structure comprises 1093 residues: Protein AF-17 (1093 aa).

The PHD-type 1 zinc-finger motif lies at 5–57; sequence VGGCCVCSDERGWAENPLVYCDGHACSVAVHQACYGIVQVPTGPWFCRKCESQ. The C2HC pre-PHD-type zinc-finger motif lies at 62–95; that stretch reads RVRCELCPHKDGALKRTDNGGWAHVVCALYIPEV. A PHD-type 2 zinc finger spans residues 118 to 181; it reads KTCYICEEQG…KYCGYCKYHF (64 aa). The tract at residues 185–500 is disordered; it reads KTSRHSSGGG…GGPAAPSLPS (316 aa). The span at 191-212 shows a compositional bias: gly residues; that stretch reads SGGGGGGAGGGGGSMGGGGSGF. The segment covering 231-255 has biased composition (basic residues); it reads PTHHERGQKKSRKDKERLKQKHKKR. S258 bears the Phosphoserine mark. Pro residues predominate over residues 258-268; sequence SPPSILTPPVV. The segment covering 282–300 has biased composition (basic and acidic residues); sequence SHHEASTQETSESSRESKG. A compositionally biased stretch (basic residues) spans 301-316; the sequence is KKSSSHSLSHKGKKLS. Positions 317–340 are enriched in low complexity; it reads SGKGVSSFTSASSSSSSSSSSSGG. Residues 345 to 354 show a composition bias toward polar residues; that stretch reads AVSSLQSSPD. Residues 374–388 are compositionally biased toward pro residues; it reads APAPSAPPSPSAPEP. Phosphoserine is present on residues S378 and S423. The segment covering 410 to 425 has biased composition (low complexity); that stretch reads STTTSSSGRARAPSPG. Residue T451 is modified to Phosphothreonine. The span at 465–484 shows a compositional bias: basic residues; sequence EKKHKASKRSRHGPGRPKGS. Positions 729 to 764 are leucine-zipper; that stretch reads LQKENQRLQEQILSLTAKKERLQILNVQLSVPFPAL. 2 disordered regions span residues 775–871 and 1060–1093; these read VPGP…RAPG and QTNP…QEKG. Over residues 787–796 the composition is skewed to low complexity; that stretch reads SSDSLSTSKS. The span at 804 to 813 shows a compositional bias: polar residues; that stretch reads GLDNSLSTSS. 2 stretches are compositionally biased toward low complexity: residues 818-832 and 839-853; these read SGCP…SFHS and LLQQ…ALPG.

In terms of assembly, interacts with histone H3; interaction is necessary for MLLT6 binding to nucleosomes; interaction is inhibited by histone H3 'Lys-27' methylations (H3K27me1, H3K27me2 and H3K27me3).

The protein resides in the nucleus. This chain is Protein AF-17 (MLLT6), found in Homo sapiens (Human).